Here is a 633-residue protein sequence, read N- to C-terminus: Chaperone protein dnaK2 (633 aa).

Phosphothreonine; by autocatalysis is present on T197. The segment covering 513-532 (AEQNASSDKERREKIERKNQ) has biased composition (basic and acidic residues). Disordered regions lie at residues 513–534 (AEQN…NQAD) and 598–633 (QQAG…TETK). Residues 606-619 (PGAAPQDGGTTSSD) show a composition bias toward low complexity. Positions 620 to 633 (GGDDVIDADFTETK) are enriched in acidic residues.

It belongs to the heat shock protein 70 family.

Acts as a chaperone. This chain is Chaperone protein dnaK2 (dnaK2), found in Nostoc sp. (strain PCC 7120 / SAG 25.82 / UTEX 2576).